Consider the following 204-residue polypeptide: Inactive ribonuclease-like protein 9 (204 aa).

Positions 1–26 (MMRTLITTHPLLLLLLLQQLLQPVQL) are cleaved as a signal peptide. 3 cysteine pairs are disulfide-bonded: C97–C152, C115–C167, and C122–C129. 2 N-linked (GlcNAc...) asparagine glycosylation sites follow: N130 and N142.

The protein belongs to the pancreatic ribonuclease family.

It is found in the secreted. In terms of biological role, does not exhibit any ribonuclease activity. The chain is Inactive ribonuclease-like protein 9 (RNASE9) from Chlorocebus aethiops (Green monkey).